Consider the following 186-residue polypeptide: Protein C (186 aa).

The span at 1–15 shows a compositional bias: polar residues; the sequence is MSKTDWNASGLSRPS. Residues 1–44 are disordered; that stretch reads MSKTDWNASGLSRPSPSAHWPSRKLWQHGQKYQTTQDRSEPPAG.

Belongs to the morbillivirus protein C family. Interacts with the phosphoprotein (via C-terminus); this interaction allows C to associate with the ribonucleocapsid.

It is found in the host nucleus. The protein localises to the host cytoplasmic vesicle. Its function is as follows. Ribonucleocapsid-associated protein that interacts with the phosphoprotein (P), thereby increasing replication accuracy and processivity of the polymerase complex. This chain is Protein C (P/V/C), found in Homo sapiens (Human).